A 329-amino-acid chain; its full sequence is Probable quinone oxidoreductase (329 aa).

The residue at position 191 (serine 191) is a Phosphoserine.

The protein belongs to the zinc-containing alcohol dehydrogenase family. Quinone oxidoreductase subfamily.

The protein resides in the cytoplasm. It is found in the nucleus. It carries out the reaction 2 a quinone + NADPH + H(+) = 2 a 1,4-benzosemiquinone + NADP(+). In Schizosaccharomyces pombe (strain 972 / ATCC 24843) (Fission yeast), this protein is Probable quinone oxidoreductase (zta1).